The chain runs to 195 residues: ATP-dependent Clp protease proteolytic subunit (195 aa).

Serine 101 (nucleophile) is an active-site residue. Histidine 126 is an active-site residue.

The protein belongs to the peptidase S14 family. As to quaternary structure, component of the chloroplastic Clp protease core complex.

It localises to the plastid. The protein localises to the chloroplast stroma. It catalyses the reaction Hydrolysis of proteins to small peptides in the presence of ATP and magnesium. alpha-casein is the usual test substrate. In the absence of ATP, only oligopeptides shorter than five residues are hydrolyzed (such as succinyl-Leu-Tyr-|-NHMec, and Leu-Tyr-Leu-|-Tyr-Trp, in which cleavage of the -Tyr-|-Leu- and -Tyr-|-Trp bonds also occurs).. Its function is as follows. Cleaves peptides in various proteins in a process that requires ATP hydrolysis. Has a chymotrypsin-like activity. Plays a major role in the degradation of misfolded proteins. The chain is ATP-dependent Clp protease proteolytic subunit from Oltmannsiellopsis viridis (Marine flagellate).